A 226-amino-acid chain; its full sequence is Deoxyribose-phosphate aldolase (226 aa).

Aspartate 93 acts as the Proton donor/acceptor in catalysis. Lysine 159 functions as the Schiff-base intermediate with acetaldehyde in the catalytic mechanism. The Proton donor/acceptor role is filled by lysine 189.

It belongs to the DeoC/FbaB aldolase family. DeoC type 1 subfamily.

It localises to the cytoplasm. It catalyses the reaction 2-deoxy-D-ribose 5-phosphate = D-glyceraldehyde 3-phosphate + acetaldehyde. The protein operates within carbohydrate degradation; 2-deoxy-D-ribose 1-phosphate degradation; D-glyceraldehyde 3-phosphate and acetaldehyde from 2-deoxy-alpha-D-ribose 1-phosphate: step 2/2. In terms of biological role, catalyzes a reversible aldol reaction between acetaldehyde and D-glyceraldehyde 3-phosphate to generate 2-deoxy-D-ribose 5-phosphate. This Mycobacterium marinum (strain ATCC BAA-535 / M) protein is Deoxyribose-phosphate aldolase.